We begin with the raw amino-acid sequence, 184 residues long: Large ribosomal subunit protein uL6 (184 aa).

This sequence belongs to the universal ribosomal protein uL6 family. Part of the 50S ribosomal subunit.

Its function is as follows. This protein binds to the 23S rRNA, and is important in its secondary structure. It is located near the subunit interface in the base of the L7/L12 stalk, and near the tRNA binding site of the peptidyltransferase center. The protein is Large ribosomal subunit protein uL6 of Cytophaga hutchinsonii (strain ATCC 33406 / DSM 1761 / CIP 103989 / NBRC 15051 / NCIMB 9469 / D465).